A 162-amino-acid polypeptide reads, in one-letter code: MRILKPHLRSTSIQCYLCLLLNSHFLTEAGIHVFILGCISAGLPKTEANWQFVIRDLEKIDNIIQSIHIDTTLYTESDAHPSCKVTAMKCFLLELRVISLEFKHHVLNETVENLIFLANDRLSSNGDITETGCKECEELEEKNIKEFLQSFVHIVQMFINTS.

The N-terminal stretch at Met1–Ala29 is a signal peptide. Positions Gly30–Ala48 are excised as a propeptide. Intrachain disulfides connect Cys83–Cys133 and Cys90–Cys136. The N-linked (GlcNAc...) asparagine glycan is linked to Asn108.

It belongs to the IL-15/IL-21 family.

It localises to the secreted. Functionally, cytokine that plays a major role in the development of inflammatory and protective immune responses to microbial invaders and parasites by modulating immune cells of both the innate and adaptive immune systems. Stimulates the proliferation of natural killer cells, T-cells and B-cells and promotes the secretion of several cytokines. In monocytes, induces the production of IL8 and monocyte chemotactic protein 1/CCL2, two chemokines that attract neutrophils and monocytes respectively to sites of infection. Unlike most cytokines, which are secreted in soluble form, IL15 is expressed in association with its high affinity IL15RA on the surface of IL15-producing cells and delivers signals to target cells that express IL2RB and IL2RG receptor subunits. Binding to its receptor triggers the phosphorylation of JAK1 and JAK3 and the recruitment and subsequent phosphorylation of signal transducer and activator of transcription-3/STAT3 and STAT5. In mast cells, induces the rapid tyrosine phosphorylation of STAT6 and thereby controls mast cell survival and release of cytokines such as IL4. This Ailuropoda melanoleuca (Giant panda) protein is Interleukin-15 (IL15).